Reading from the N-terminus, the 712-residue chain is Satratoxin biosynthesis SC3 cluster transcription factor SAT20 (712 aa).

4 stretches are compositionally biased toward polar residues: residues 1-10, 25-36, 131-145, and 269-282; these read MPNLPGSSDS, CSSTKPNAAQEN, SEPSVHSTDNPWPSL, and SLPSNPPTALSSTG. 3 disordered regions span residues 1 to 43, 115 to 145, and 264 to 294; these read MPNL…ELAQ, SQNAFGQGSFDPFVPSSEPSVHSTDNPWPSL, and PVSGASLPSNPPTALSSTGTRKRKRFNKADR. A DNA-binding region (zn(2)-C6 fungal-type) is located at residues 306 to 339; the sequence is CFRCRMYKENCDPGLPCKNCMRVQVTRRTFFGPC. Residues 530–560 adopt a coiled-coil conformation; that stretch reads QIQIMVAQVMLDKQKNALKRLQERALSKNRH.

Its subcellular location is the nucleus. In terms of biological role, transcriptional regulator that may regulate the expression of the satratoxin biosynthesis SC3 cluster, one of the 3 clusters involved in the biosynthesis of satratoxins, trichothecene mycotoxins that are associated with human food poisonings. In Stachybotrys chartarum (strain CBS 109288 / IBT 7711) (Toxic black mold), this protein is Satratoxin biosynthesis SC3 cluster transcription factor SAT20.